Reading from the N-terminus, the 364-residue chain is Threonine-phosphate decarboxylase (364 aa).

Residues 8-9, asparagine 32, and asparagine 157 contribute to the O-phospho-L-threonine site; that span reads HG. Position 216 is an N6-(pyridoxal phosphate)lysine (lysine 216). Residues arginine 323 and arginine 337 each coordinate O-phospho-L-threonine.

Belongs to the class-II pyridoxal-phosphate-dependent aminotransferase family. As to quaternary structure, homodimer. It depends on pyridoxal 5'-phosphate as a cofactor.

The enzyme catalyses O-phospho-L-threonine + H(+) = (R)-1-aminopropan-2-yl phosphate + CO2. Its pathway is cofactor biosynthesis; adenosylcobalamin biosynthesis. Functionally, decarboxylates L-threonine-O-3-phosphate to yield (R)-1-amino-2-propanol O-2-phosphate, the precursor for the linkage between the nucleotide loop and the corrin ring in cobalamin. This is Threonine-phosphate decarboxylase (cobD) from Salmonella typhimurium (strain LT2 / SGSC1412 / ATCC 700720).